A 480-amino-acid polypeptide reads, in one-letter code: Probable glycine dehydrogenase (decarboxylating) subunit 2 (480 aa).

Lys265 carries the N6-(pyridoxal phosphate)lysine modification.

Belongs to the GcvP family. C-terminal subunit subfamily. The glycine cleavage system is composed of four proteins: P, T, L and H. In this organism, the P 'protein' is a heterodimer of two subunits. Requires pyridoxal 5'-phosphate as cofactor.

It catalyses the reaction N(6)-[(R)-lipoyl]-L-lysyl-[glycine-cleavage complex H protein] + glycine + H(+) = N(6)-[(R)-S(8)-aminomethyldihydrolipoyl]-L-lysyl-[glycine-cleavage complex H protein] + CO2. Its function is as follows. The glycine cleavage system catalyzes the degradation of glycine. The P protein binds the alpha-amino group of glycine through its pyridoxal phosphate cofactor; CO(2) is released and the remaining methylamine moiety is then transferred to the lipoamide cofactor of the H protein. This Thermosipho africanus (strain TCF52B) protein is Probable glycine dehydrogenase (decarboxylating) subunit 2.